Here is a 603-residue protein sequence, read N- to C-terminus: Proline--tRNA ligase (603 aa).

This sequence belongs to the class-II aminoacyl-tRNA synthetase family. ProS type 1 subfamily. Homodimer.

The protein localises to the cytoplasm. The enzyme catalyses tRNA(Pro) + L-proline + ATP = L-prolyl-tRNA(Pro) + AMP + diphosphate. Catalyzes the attachment of proline to tRNA(Pro) in a two-step reaction: proline is first activated by ATP to form Pro-AMP and then transferred to the acceptor end of tRNA(Pro). As ProRS can inadvertently accommodate and process non-cognate amino acids such as alanine and cysteine, to avoid such errors it has two additional distinct editing activities against alanine. One activity is designated as 'pretransfer' editing and involves the tRNA(Pro)-independent hydrolysis of activated Ala-AMP. The other activity is designated 'posttransfer' editing and involves deacylation of mischarged Ala-tRNA(Pro). The misacylated Cys-tRNA(Pro) is not edited by ProRS. The sequence is that of Proline--tRNA ligase from Paenarthrobacter aurescens (strain TC1).